Consider the following 334-residue polypeptide: Glycerol-1-phosphate dehydrogenase [NAD(P)+] (334 aa).

Residues G77–D81 and T99–S102 contribute to the NAD(+) site. D104 serves as a coordination point for substrate. S108 provides a ligand contact to NAD(+). D147 is a substrate binding site. D147 and H225 together coordinate Zn(2+). H229 contacts substrate. H246 is a binding site for Zn(2+).

It belongs to the glycerol-1-phosphate dehydrogenase family. Zn(2+) is required as a cofactor.

It localises to the cytoplasm. It catalyses the reaction sn-glycerol 1-phosphate + NAD(+) = dihydroxyacetone phosphate + NADH + H(+). It carries out the reaction sn-glycerol 1-phosphate + NADP(+) = dihydroxyacetone phosphate + NADPH + H(+). It participates in membrane lipid metabolism; glycerophospholipid metabolism. Catalyzes the NAD(P)H-dependent reduction of dihydroxyacetonephosphate (DHAP or glycerone phosphate) to glycerol 1-phosphate (G1P). The G1P thus generated is used as the glycerophosphate backbone of phospholipids in the cellular membranes of Archaea. In Methanococcus maripaludis (strain C5 / ATCC BAA-1333), this protein is Glycerol-1-phosphate dehydrogenase [NAD(P)+].